Here is a 520-residue protein sequence, read N- to C-terminus: Acetylcholine receptor subunit delta (520 aa).

The N-terminal stretch at 1–24 (MAGPVLTLGLLAALVVCALPGSWG) is a signal peptide. The Extracellular segment spans residues 25 to 248 (LNEEQRLIQH…VTFYLIIRRK (224 aa)). N100, N167, and N193 each carry an N-linked (GlcNAc...) asparagine glycan. C154 and C168 are oxidised to a cystine. The next 3 membrane-spanning stretches (helical) occupy residues 249-273 (PLFY…VFYL), 281-299 (TSVA…LLIS), and 315-336 (FLLF…VLNI). Residues 337 to 474 (HFRTPSTHVL…WNQVARTVDR (138 aa)) lie on the Cytoplasmic side of the membrane. A Phosphotyrosine; by Tyr-kinases modification is found at Y393. A helical transmembrane segment spans residues 475 to 493 (LCLFVVTPVMVVGTAWIFL).

Belongs to the ligand-gated ion channel (TC 1.A.9) family. Acetylcholine receptor (TC 1.A.9.1) subfamily. Delta/CHRND sub-subfamily. In terms of assembly, pentamer of two alpha chains, and one each of the beta, delta, and gamma (in immature muscle) or epsilon (in mature muscle) chains. The muscle heteropentamer composed of alpha-1, beta-1, delta, epsilon subunits interacts with the alpha-conotoxin ImII.

The protein localises to the postsynaptic cell membrane. Its subcellular location is the cell membrane. The enzyme catalyses K(+)(in) = K(+)(out). It catalyses the reaction Na(+)(in) = Na(+)(out). After binding acetylcholine, the AChR responds by an extensive change in conformation that affects all subunits and leads to opening of an ion-conducting channel across the plasma membrane. In Mus musculus (Mouse), this protein is Acetylcholine receptor subunit delta (Chrnd).